The sequence spans 179 residues: Pyridoxal 5'-phosphate synthase subunit PdxT (179 aa).

48-50 contributes to the L-glutamine binding site; it reads GES. The active-site Nucleophile is Cys-79. Residues Arg-101 and 127 to 128 each bind L-glutamine; that span reads IR. Active-site charge relay system residues include His-163 and Glu-165.

It belongs to the glutaminase PdxT/SNO family. In terms of assembly, in the presence of PdxS, forms a dodecamer of heterodimers. Only shows activity in the heterodimer.

The catalysed reaction is aldehydo-D-ribose 5-phosphate + D-glyceraldehyde 3-phosphate + L-glutamine = pyridoxal 5'-phosphate + L-glutamate + phosphate + 3 H2O + H(+). It carries out the reaction L-glutamine + H2O = L-glutamate + NH4(+). It participates in cofactor biosynthesis; pyridoxal 5'-phosphate biosynthesis. In terms of biological role, catalyzes the hydrolysis of glutamine to glutamate and ammonia as part of the biosynthesis of pyridoxal 5'-phosphate. The resulting ammonia molecule is channeled to the active site of PdxS. The polypeptide is Pyridoxal 5'-phosphate synthase subunit PdxT (Francisella tularensis subsp. holarctica (strain FTNF002-00 / FTA)).